We begin with the raw amino-acid sequence, 1628 residues long: Lysine-specific histone demethylase 1 homolog 3 (1628 aa).

The tract at residues 1-71 (MDGKEKKSGS…KKLSALGKDS (71 aa)) is disordered. Acidic residues predominate over residues 19 to 28 (FDDDADDDEP). Positions 43–64 (KDKVETESTGKQRQKQVVEKKL) are enriched in basic and acidic residues. An SWIRM domain is found at 378 to 478 (GRAAAVTAGL…AGISSVNGKA (101 aa)). 4 residues coordinate FAD: Glu647, Arg649, Arg655, and Glu1077. The segment at 1271–1317 (SGKKSLRQANTTNTSRIRRKLNSPDTDSKGKLSNGNDVKTDEEFEDN) is disordered.

It belongs to the flavin monoamine oxidase family. Requires FAD as cofactor.

In terms of biological role, probable histone demethylase that reduces the levels of histone H3 'Lys-4' methylation in chromatin. The polypeptide is Lysine-specific histone demethylase 1 homolog 3 (LDL3) (Arabidopsis thaliana (Mouse-ear cress)).